The sequence spans 170 residues: NADH-ubiquinone oxidoreductase chain 6 (170 aa).

5 helical membrane-spanning segments follow: residues Met1–Ser21, Phe26–Phe46, Ser49–Tyr69, Val86–Gly106, and Trp138–Val158.

It belongs to the complex I subunit 6 family. Core subunit of respiratory chain NADH dehydrogenase (Complex I) which is composed of 45 different subunits.

The protein localises to the mitochondrion inner membrane. It catalyses the reaction a ubiquinone + NADH + 5 H(+)(in) = a ubiquinol + NAD(+) + 4 H(+)(out). Its function is as follows. Core subunit of the mitochondrial membrane respiratory chain NADH dehydrogenase (Complex I) which catalyzes electron transfer from NADH through the respiratory chain, using ubiquinone as an electron acceptor. Essential for the catalytic activity and assembly of complex I. In Xenopus laevis (African clawed frog), this protein is NADH-ubiquinone oxidoreductase chain 6 (mt-nd6).